The chain runs to 313 residues: Protein FixB (313 aa).

255-283 (LYLAVGISGQIQHMVGANASQTIFAINKD) contributes to the FAD binding site.

It belongs to the ETF alpha-subunit/FixB family. As to quaternary structure, heterodimer of FixA and FixB.

Its pathway is amine and polyamine metabolism; carnitine metabolism. Its function is as follows. Required for anaerobic carnitine reduction. May bring reductant to CaiA. In Escherichia coli O127:H6 (strain E2348/69 / EPEC), this protein is Protein FixB.